The chain runs to 446 residues: METSFVQTTMALGLSSKKASSRNVAVERKNLITVCRFSVKTLLEKYTAEPIDDSSEEFVNFAAILEQILSHRFKACAPAGPVSWFSSDGQRGFWDYIRLACSKVPNNCVSSIENMENISTARAKGRAWIRVALMEKRMSEYITTALRDTRTTRRFYDSGAIMLRDEATILTGMLIGLSAIDFSFCLKGEVLDGKTPVVIDYTPYLKFTQSYDYLTDEEERHSAESSTSEDNSPEHPYLPLVTDEDSWYSKWHKMEQKFRIVYAQKGYLEELVRLRESQLKDLEAENRRLQLQLEEAAAQNQREKRELEGVILELQEQLTGLIPSDHAPLAQGSKELTTPLVNQWPSLGTLNGAEGASNSKLYRRHSFMSTEPLSAEASLSSDSQRLGEGTRDEEPWGPIGKDPTPSMLGLCGSLASIPSCKSLASFKSNECLVSDSPEGSPALSPS.

The segment at 1-298 (METSFVQTTM…LQLQLEEAAA (298 aa)) is interaction with RAP2A. The RUN domain occupies 52–189 (DDSSEEFVNF…IDFSFCLKGE (138 aa)). Thr215 carries the post-translational modification Phosphothreonine. The segment at 216–239 (DEEERHSAESSTSEDNSPEHPYLP) is disordered. A Phosphoserine modification is found at Ser232. Residues 267–322 (YLEELVRLRESQLKDLEAENRRLQLQLEEAAAQNQREKRELEGVILELQEQLTGLI) adopt a coiled-coil conformation. A compositionally biased stretch (polar residues) spans 372–384 (PLSAEASLSSDSQ). The segment at 372–404 (PLSAEASLSSDSQRLGEGTRDEEPWGPIGKDPT) is disordered. A phosphoserine mark is found at Ser416 and Ser419.

The protein belongs to the RUNDC3 family. In terms of assembly, interacts with the GTP-bound form of RAP2A.

Its function is as follows. May act as an effector of RAP2A in neuronal cells. The sequence is that of RUN domain-containing protein 3A (RUNDC3A) from Pongo abelii (Sumatran orangutan).